Reading from the N-terminus, the 124-residue chain is Small ribosomal subunit protein uS12 (124 aa).

D89 is modified (3-methylthioaspartic acid).

This sequence belongs to the universal ribosomal protein uS12 family. As to quaternary structure, part of the 30S ribosomal subunit. Contacts proteins S8 and S17. May interact with IF1 in the 30S initiation complex.

With S4 and S5 plays an important role in translational accuracy. Its function is as follows. Interacts with and stabilizes bases of the 16S rRNA that are involved in tRNA selection in the A site and with the mRNA backbone. Located at the interface of the 30S and 50S subunits, it traverses the body of the 30S subunit contacting proteins on the other side and probably holding the rRNA structure together. The combined cluster of proteins S8, S12 and S17 appears to hold together the shoulder and platform of the 30S subunit. This is Small ribosomal subunit protein uS12 from Shewanella oneidensis (strain ATCC 700550 / JCM 31522 / CIP 106686 / LMG 19005 / NCIMB 14063 / MR-1).